The primary structure comprises 231 residues: uncharacterized protein (231 aa).

Residues 86–106 (LIILFVIGLIITIIGLLMYEP) traverse the membrane as a helical segment.

Its subcellular location is the membrane. This is an uncharacterized protein from Methanocaldococcus jannaschii (strain ATCC 43067 / DSM 2661 / JAL-1 / JCM 10045 / NBRC 100440) (Methanococcus jannaschii).